A 953-amino-acid polypeptide reads, in one-letter code: Isoleucine--tRNA ligase (953 aa).

The short motif at 57 to 67 is the 'HIGH' region element; that stretch reads PYANGDIHIGH. Position 582 (Glu582) interacts with L-isoleucyl-5'-AMP. The 'KMSKS' region motif lies at 623 to 627; sequence KMSKS. Residue Lys626 coordinates ATP. Zn(2+) is bound by residues Cys916, Cys919, Cys936, and Cys939.

This sequence belongs to the class-I aminoacyl-tRNA synthetase family. IleS type 1 subfamily. As to quaternary structure, monomer. Zn(2+) serves as cofactor.

Its subcellular location is the cytoplasm. It catalyses the reaction tRNA(Ile) + L-isoleucine + ATP = L-isoleucyl-tRNA(Ile) + AMP + diphosphate. Functionally, catalyzes the attachment of isoleucine to tRNA(Ile). As IleRS can inadvertently accommodate and process structurally similar amino acids such as valine, to avoid such errors it has two additional distinct tRNA(Ile)-dependent editing activities. One activity is designated as 'pretransfer' editing and involves the hydrolysis of activated Val-AMP. The other activity is designated 'posttransfer' editing and involves deacylation of mischarged Val-tRNA(Ile). This is Isoleucine--tRNA ligase from Bordetella petrii (strain ATCC BAA-461 / DSM 12804 / CCUG 43448).